The following is a 130-amino-acid chain: D-ribose pyranase (130 aa).

Residue histidine 20 is the Proton donor of the active site. Residues aspartate 28, histidine 97, and 119-121 (YAN) contribute to the substrate site.

Belongs to the RbsD / FucU family. RbsD subfamily. Homodecamer.

It localises to the cytoplasm. It carries out the reaction beta-D-ribopyranose = beta-D-ribofuranose. It participates in carbohydrate metabolism; D-ribose degradation; D-ribose 5-phosphate from beta-D-ribopyranose: step 1/2. Functionally, catalyzes the interconversion of beta-pyran and beta-furan forms of D-ribose. The polypeptide is D-ribose pyranase (Heliobacterium modesticaldum (strain ATCC 51547 / Ice1)).